We begin with the raw amino-acid sequence, 62 residues long: Large ribosomal subunit protein uL30 (62 aa).

Belongs to the universal ribosomal protein uL30 family. In terms of assembly, part of the 50S ribosomal subunit.

This Cereibacter sphaeroides (strain ATCC 17029 / ATH 2.4.9) (Rhodobacter sphaeroides) protein is Large ribosomal subunit protein uL30.